A 444-amino-acid chain; its full sequence is MRNIIYFILSLLFSVTSYALETINIEHGRADPTPIAVNKFYADNSAADVLGHDMVKVISNDLKLSGLFRPISAASFIEEKTGIEYKPLFAAWRQINASLLVNGEVKKLESGKFQISFILWDTLLEKQLVGEILEVPKNLWRRAAHKIADKIYEKITGDAGYFDTKIVYVSESSSLPKIKRIALMDYDGANNKYLTNGKSLVLTPRFARSADKIFYVSYATKRRVLVYEKDLKTGKESVVGDFPGISFAPRFSPDGRKAVMSIAKNGSTHIYEIDLATKRLHKLTDGFGINTSPSYSPDGTKIVYNSDRNGVPQLYIMNSDGSDVQRISFGGGSYAAPSWSPRGDYIAFTKITKGDGGKTFNIGIMKACPQDNKNSERIITSGYLVESPCWSPNGRVIMFAKGWPSSAKAPGKNKIFAIDLTGHNEREIMTPADASDPEWSGVLN.

The first 19 residues, Met-1–Ala-19, serve as a signal peptide directing secretion.

It belongs to the TolB family. In terms of assembly, the Tol-Pal system is composed of five core proteins: the inner membrane proteins TolA, TolQ and TolR, the periplasmic protein TolB and the outer membrane protein Pal. They form a network linking the inner and outer membranes and the peptidoglycan layer.

The protein resides in the periplasm. Its function is as follows. Part of the Tol-Pal system, which plays a role in outer membrane invagination during cell division and is important for maintaining outer membrane integrity. This chain is Tol-Pal system protein TolB, found in Rickettsia rickettsii (strain Iowa).